A 306-amino-acid polypeptide reads, in one-letter code: Pantothenate kinase (306 aa).

An ATP-binding site is contributed by 90-97 (GSVAVGKS).

It belongs to the prokaryotic pantothenate kinase family.

The protein resides in the cytoplasm. It carries out the reaction (R)-pantothenate + ATP = (R)-4'-phosphopantothenate + ADP + H(+). Its pathway is cofactor biosynthesis; coenzyme A biosynthesis; CoA from (R)-pantothenate: step 1/5. This is Pantothenate kinase from Lactococcus lactis subsp. cremoris (strain SK11).